The primary structure comprises 71 residues: Protein translocase subunit SecE (71 aa).

The helical transmembrane segment at 43–63 (VAGAGILAVGAVGFIIYVLLT) threads the bilayer.

The protein belongs to the SecE/SEC61-gamma family. As to quaternary structure, component of the Sec protein translocase complex. Heterotrimer consisting of SecY (alpha), SecG (beta) and SecE (gamma) subunits. The heterotrimers can form oligomers, although 1 heterotrimer is thought to be able to translocate proteins. Interacts with the ribosome. May interact with SecDF, and other proteins may be involved.

Its subcellular location is the cell membrane. Essential subunit of the Sec protein translocation channel SecYEG. Clamps together the 2 halves of SecY. May contact the channel plug during translocation. The polypeptide is Protein translocase subunit SecE (Methanosarcina mazei (strain ATCC BAA-159 / DSM 3647 / Goe1 / Go1 / JCM 11833 / OCM 88) (Methanosarcina frisia)).